Reading from the N-terminus, the 333-residue chain is Glyceraldehyde-3-phosphate dehydrogenase (333 aa).

Residue serine 1 is modified to N-acetylserine. NAD(+) is bound by residues arginine 10–isoleucine 11, aspartate 31, and serine 118. D-glyceraldehyde 3-phosphate-binding positions include serine 147 to threonine 149, threonine 178, threonine 207 to glycine 208, and arginine 230. Cysteine 148 (nucleophile) is an active-site residue. Position 312 (asparagine 312) interacts with NAD(+).

This sequence belongs to the glyceraldehyde-3-phosphate dehydrogenase family. Homotetramer.

It localises to the cytoplasm. It catalyses the reaction D-glyceraldehyde 3-phosphate + phosphate + NAD(+) = (2R)-3-phospho-glyceroyl phosphate + NADH + H(+). It functions in the pathway carbohydrate degradation; glycolysis; pyruvate from D-glyceraldehyde 3-phosphate: step 1/5. The sequence is that of Glyceraldehyde-3-phosphate dehydrogenase from Homarus americanus (American lobster).